A 139-amino-acid chain; its full sequence is Large ribosomal subunit protein uL16 (139 aa).

A compositionally biased stretch (basic residues) spans 1–20 (MLMPRRVKHRKQHHPTRRGA). Residues 1-24 (MLMPRRVKHRKQHHPTRRGAAKGG) form a disordered region.

Belongs to the universal ribosomal protein uL16 family. Part of the 50S ribosomal subunit.

Binds 23S rRNA and is also seen to make contacts with the A and possibly P site tRNAs. This is Large ribosomal subunit protein uL16 from Nocardioides sp. (strain ATCC BAA-499 / JS614).